The following is a 445-amino-acid chain: Amino-acid acetyltransferase (445 aa).

The N-acetyltransferase domain occupies 299 to 438 (EQVRQAQIDD…QGLYNYQRNS (140 aa)).

It belongs to the acetyltransferase family. ArgA subfamily.

Its subcellular location is the cytoplasm. The catalysed reaction is L-glutamate + acetyl-CoA = N-acetyl-L-glutamate + CoA + H(+). It participates in amino-acid biosynthesis; L-arginine biosynthesis; N(2)-acetyl-L-ornithine from L-glutamate: step 1/4. In Vibrio atlanticus (strain LGP32) (Vibrio splendidus (strain Mel32)), this protein is Amino-acid acetyltransferase.